The following is a 1026-amino-acid chain: DNA cross-link repair 1A protein (1026 aa).

The interval 1 to 189 (MLEDTWEEEI…RDSKEPLGSP (189 aa)) is nuclear localization region. The disordered stretch occupies residues 12–110 (EYKSKRKPKP…HRTRRGKQVT (99 aa)). Residues 34-65 (SVEKSTDGKHQSKGNEKRTSENPGKTKDHKVC) show a composition bias toward basic and acidic residues. A compositionally biased stretch (low complexity) spans 71–82 (SQISAGSSQSSS). Residues 98–107 (KKQHRTRRGK) show a composition bias toward basic residues. Residues 118-148 (DGYCPSCQMPFSSLLGQTPQWHVFECLDSPP) form a UBZ4-type zinc finger. Cys-121, Cys-124, His-139, and Cys-143 together coordinate Zn(2+). Residues Lys-359, Lys-434, and Lys-522 each participate in a glycyl lysine isopeptide (Lys-Gly) (interchain with G-Cter in SUMO2) cross-link. The nuclear focus formation stretch occupies residues 401-602 (SQEDLPHTDA…SSLSDLEFDA (202 aa)). 3 disordered regions span residues 474-542 (PLEK…SKKV), 560-590 (ETSL…CKRK), and 602-651 (AKNL…PELG). The span at 527–540 (SPSSPKCSPSQPSK) shows a compositional bias: low complexity. The span at 569-581 (EGPNVSPVVSPNQ) shows a compositional bias: polar residues. 2 positions are modified to phosphoserine: Ser-574 and Ser-578. Positions 619–628 (RQHRRKRHKT) are enriched in basic residues. Lys-657 is covalently cross-linked (Glycyl lysine isopeptide (Lys-Gly) (interchain with G-Cter in SUMO2)).

The protein belongs to the DNA repair metallo-beta-lactamase (DRMBL) family. As to quaternary structure, binds constitutively to TP53BP1. Binds CDC27, which is itself a component of the anaphase promoting complex (APC). Binds PIAS1.

The protein resides in the nucleus. The enzyme catalyses a beta-lactam + H2O = a substituted beta-amino acid. May be required for DNA interstrand cross-link repair. Also required for checkpoint mediated cell cycle arrest in early prophase in response to mitotic spindle poisons. This chain is DNA cross-link repair 1A protein (Dclre1a), found in Mus musculus (Mouse).